A 330-amino-acid chain; its full sequence is Type II methyltransferase M.MthTI (330 aa).

Positions 3–328 constitute an SAM-dependent MTase C5-type domain; sequence MDIASFFSGA…KKIKKDLEGV (326 aa). Residue Cys-73 is part of the active site.

Belongs to the class I-like SAM-binding methyltransferase superfamily. C5-methyltransferase family.

The enzyme catalyses a 2'-deoxycytidine in DNA + S-adenosyl-L-methionine = a 5-methyl-2'-deoxycytidine in DNA + S-adenosyl-L-homocysteine + H(+). Functionally, a methylase that recognizes the double-stranded sequence 5'-GGCC-3', methylates C-3 on both strands, and protects the DNA from cleavage by the MthTI endonuclease. The chain is Type II methyltransferase M.MthTI (mthTIM) from Methanothermobacter thermautotrophicus (Methanobacterium thermoformicicum).